We begin with the raw amino-acid sequence, 66 residues long: Large ribosomal subunit protein uL29 (66 aa).

Belongs to the universal ribosomal protein uL29 family.

The sequence is that of Large ribosomal subunit protein uL29 from Mesorhizobium japonicum (strain LMG 29417 / CECT 9101 / MAFF 303099) (Mesorhizobium loti (strain MAFF 303099)).